The chain runs to 491 residues: MTLEWNIDDKFHLFFRKKRSVYIVGGVHHDEDEVDPKVVAQSGLQGDDGVVRLPPLNTLVNFLGHVSPYMHADYAFLHREWEYNRTASFADDLVNLPSVYDWRYVYPRDDEETKRKKRYIMPPDNQYLCGSCWAVSTASAIGDAYVVAGLVDWRPDISPAWALTCYPQGQCEGGSPALLLKEISQGNGIVSNHCLDYSFCASNPRCNGAAANHFGAENLSELVPKSCGCYVGDSMHYRYTVDPLIRTLAIGVGTVTEENIQSTIKRHILTHGPVLAGYFVLKNFTSGYFTRINGGVYFDRGNYIPGQALVFNDHYCSGDSYRGSHAVAIIGWGVARNVLYDTDKRGDVPYWYCRNSWRSTWGGDDGYFKMAMYPWNRVAQFEKLVTLRDRDNVPHRCGGIITFTVSTKPVKVKMNQLNTTLLPFPLLRDRSWYGGDQEEYRPAIVPKLAPSDGPNKPPLPLPVYYSALDLALLVLPALLIVIVVLIGKIPT.

Catalysis depends on residues cysteine 132, histidine 325, and asparagine 355. A helical membrane pass occupies residues 467 to 487; that stretch reads ALDLALLVLPALLIVIVVLIG.

The protein belongs to the peptidase C1 family.

Its subcellular location is the membrane. Its function is as follows. Probable cysteine protease. The sequence is that of Probable cysteine proteinase 024R from Invertebrate iridescent virus 3 (IIV-3).